A 168-amino-acid chain; its full sequence is Phosphopantetheine adenylyltransferase (168 aa).

A substrate-binding site is contributed by threonine 14. ATP is bound by residues 14-15 (TF) and histidine 22. Residues lysine 46, leucine 78, and arginine 92 each contribute to the substrate site. ATP-binding positions include 93-95 (GLR), glutamate 103, and 128-134 (YSFISSS).

The protein belongs to the bacterial CoaD family. Homohexamer. The cofactor is Mg(2+).

The protein localises to the cytoplasm. It carries out the reaction (R)-4'-phosphopantetheine + ATP + H(+) = 3'-dephospho-CoA + diphosphate. Its pathway is cofactor biosynthesis; coenzyme A biosynthesis; CoA from (R)-pantothenate: step 4/5. Reversibly transfers an adenylyl group from ATP to 4'-phosphopantetheine, yielding dephospho-CoA (dPCoA) and pyrophosphate. The polypeptide is Phosphopantetheine adenylyltransferase (Xanthomonas campestris pv. campestris (strain 8004)).